Reading from the N-terminus, the 121-residue chain is Ribosome-binding factor A (121 aa).

This sequence belongs to the RbfA family. In terms of assembly, monomer. Binds 30S ribosomal subunits, but not 50S ribosomal subunits or 70S ribosomes.

It localises to the cytoplasm. In terms of biological role, one of several proteins that assist in the late maturation steps of the functional core of the 30S ribosomal subunit. Associates with free 30S ribosomal subunits (but not with 30S subunits that are part of 70S ribosomes or polysomes). Required for efficient processing of 16S rRNA. May interact with the 5'-terminal helix region of 16S rRNA. The chain is Ribosome-binding factor A from Brevibacillus brevis (strain 47 / JCM 6285 / NBRC 100599).